A 485-amino-acid polypeptide reads, in one-letter code: NGFI-A-binding protein 1 (485 aa).

The interval 4–82 is NCD1; that stretch reads ALPRTLGELQ…RDWVTNPGLF (79 aa). Residues lysine 126, lysine 129, and lysine 143 each participate in a glycyl lysine isopeptide (Lys-Gly) (interchain with G-Cter in SUMO2) cross-link. A disordered region spans residues 160–187; it reads WQGHHATESEHSLSPADVGSPASPKESS. Phosphoserine is present on residues serine 171 and serine 182. Lysine 211 participates in a covalent cross-link: Glycyl lysine isopeptide (Lys-Gly) (interchain with G-Cter in SUMO2). The interval 220–309 is NCD2; that stretch reads LLKNNKKLAK…ARQVSREVTY (90 aa). Residues 306–337 form a necessary for nuclear localization region; that stretch reads EVTYKYTYRTTRLKCGERDELSPKRIKVEDGF. Residue serine 327 is modified to Phosphoserine. Residue lysine 332 forms a Glycyl lysine isopeptide (Lys-Gly) (interchain with G-Cter in SUMO1); alternate linkage. Residue lysine 332 forms a Glycyl lysine isopeptide (Lys-Gly) (interchain with G-Cter in SUMO2); alternate linkage. Glycyl lysine isopeptide (Lys-Gly) (interchain with G-Cter in SUMO2) cross-links involve residues lysine 354, lysine 368, and lysine 372. Residues 398–432 are disordered; the sequence is RQSSGEHSPDGLPSDGSDGQGERPLNLRMPNVQNR. At serine 405 the chain carries Phosphoserine. Glycyl lysine isopeptide (Lys-Gly) (interchain with G-Cter in SUMO2) cross-links involve residues lysine 452, lysine 463, and lysine 475. Lysine 478 participates in a covalent cross-link: Glycyl lysine isopeptide (Lys-Gly) (interchain with G-Cter in SUMO1); alternate. Lysine 478 is covalently cross-linked (Glycyl lysine isopeptide (Lys-Gly) (interchain with G-Cter in SUMO2); alternate).

The protein belongs to the NAB family. In terms of assembly, homomultimers may associate with EGR1 bound to DNA.

The protein resides in the nucleus. Acts as a transcriptional repressor for zinc finger transcription factors EGR1 and EGR2. This is NGFI-A-binding protein 1 (NAB1) from Mesocricetus auratus (Golden hamster).